Here is a 219-residue protein sequence, read N- to C-terminus: Probable GTP-binding protein EngB (219 aa).

The EngB-type G domain occupies 24-207 (VQPEIAFAGR…HELIESWLRP (184 aa)). Residues 32–39 (GRSNAGKS), 59–63 (GRTQH), 81–84 (DLPG), 148–151 (TKCD), and 186–188 (FSA) each bind GTP. The Mg(2+) site is built by serine 39 and threonine 61.

The protein belongs to the TRAFAC class TrmE-Era-EngA-EngB-Septin-like GTPase superfamily. EngB GTPase family. The cofactor is Mg(2+).

Its function is as follows. Necessary for normal cell division and for the maintenance of normal septation. In Burkholderia vietnamiensis (strain G4 / LMG 22486) (Burkholderia cepacia (strain R1808)), this protein is Probable GTP-binding protein EngB.